We begin with the raw amino-acid sequence, 640 residues long: Zinc finger protein 549 (640 aa).

The 114-residue stretch at 27-140 folds into the KRAB domain; the sequence is VTFEDIAVYF…PYTSVASGKW (114 aa). A C2H2-type 1; degenerate zinc finger spans residues 217–241; that stretch reads FQQRRYKCEQVFNEKVHVTEHQRVH. Residue lysine 223 forms a Glycyl lysine isopeptide (Lys-Gly) (interchain with G-Cter in SUMO2) linkage. A C2H2-type 2; degenerate zinc finger spans residues 247–269; that stretch reads YKRREYGKSLNSKYLFVEHQRTH. 13 consecutive C2H2-type zinc fingers follow at residues 275–298, 304–326, 332–355, 361–383, 389–411, 417–439, 445–467, 473–495, 501–523, 529–551, 557–579, 585–607, and 613–635; these read YVCNICGKSFLHKQTLVGHQQRIH, YVCIECGKSLSSKYSLVEHQRTH, YVCNVCGKSFRHKQTFVGHQQRIH, YVCMECGKSFIHSYDRIRHQRVH, YQCSECGKSFIYKQSLLDHHRIH, YECKECGKAFIHKKRLLEHQRIH, YVCIICGKSFIRSSDYMRHQRIH, YECSDCGKAFISKQTLLKHHKIH, YECSECGKGFYLEVKLLQHQRIH, CECNECGKVFSHQKRLLEHQKVH, CECSECGKCFRHRTSLIQHQKVH, YNCTACEKAFIYKNKLVEHQRIH, and YECGKCGKAFNKRYSLVRHQKVH.

The protein belongs to the krueppel C2H2-type zinc-finger protein family.

It localises to the nucleus. Functionally, may be involved in transcriptional regulation. The sequence is that of Zinc finger protein 549 (ZNF549) from Homo sapiens (Human).